Reading from the N-terminus, the 539-residue chain is GMP synthase [glutamine-hydrolyzing] (539 aa).

The region spanning 4–202 (KILILDFGSQ…VLGICRAKAD (199 aa)) is the Glutamine amidotransferase type-1 domain. The active-site Nucleophile is the cysteine 81. Active-site residues include histidine 176 and glutamate 178. A GMPS ATP-PPase domain is found at 203-395 (WVMKDHIEEA…LGLPPEMVYR (193 aa)). 230–236 (SGGVDSS) is a binding site for ATP.

As to quaternary structure, homodimer.

The catalysed reaction is XMP + L-glutamine + ATP + H2O = GMP + L-glutamate + AMP + diphosphate + 2 H(+). It functions in the pathway purine metabolism; GMP biosynthesis; GMP from XMP (L-Gln route): step 1/1. Its function is as follows. Catalyzes the synthesis of GMP from XMP. This Cupriavidus pinatubonensis (strain JMP 134 / LMG 1197) (Cupriavidus necator (strain JMP 134)) protein is GMP synthase [glutamine-hydrolyzing].